A 383-amino-acid chain; its full sequence is uncharacterized protein (383 aa).

Disordered regions lie at residues 1-30 (MDLCQKNETDLENGENNEIQSTEETEPTCT), 114-144 (ETKPPTEGGPEKDQSSPSQTQAAPQGPSTAS), 262-289 (GEKRPSELAKHTVVNDTPSSPSPAARTS), and 341-360 (AKDPRPPVITQKAKQENSPQ). Acidic residues predominate over residues 10 to 26 (DLENGENNEIQSTEETE). The span at 128–141 (SSPSQTQAAPQGPS) shows a compositional bias: low complexity. Residues 262–271 (GEKRPSELAK) show a composition bias toward basic and acidic residues.

This is an uncharacterized protein from Macaca fascicularis (Crab-eating macaque).